The sequence spans 416 residues: PDZ and LIM domain protein 7 (416 aa).

Positions 1-85 (MESYKVMLNG…RLCLTLSRAQ (85 aa)) constitute a PDZ domain. 2 disordered regions span residues 145-191 (CTPQ…AVDP) and 202-221 (TSTV…MQNR). The span at 168–181 (PGLAPRTPAATPGP) shows a compositional bias: low complexity. LIM zinc-binding domains lie at 239 to 297 (PLCY…TRYA), 298 to 357 (PSCA…MFGT), and 358 to 416 (KCRG…FSHV).

Interacts with various PKC isoforms through the LIM zinc-binding domains. Interacts with TPM2. Interacts with TBX4 and TBX5.

Its subcellular location is the cytoplasm. The protein localises to the cytoskeleton. It localises to the myofibril. It is found in the sarcomere. The protein resides in the z line. Its function is as follows. May function as a scaffold on which the coordinated assembly of proteins can occur. May play a role as an adapter that, via its PDZ domain, localizes LIM-binding proteins to actin filaments of both skeletal muscle and nonmuscle tissues. May be involved in bone formation. The sequence is that of PDZ and LIM domain protein 7 (PDLIM7) from Gallus gallus (Chicken).